Consider the following 249-residue polypeptide: MSKHSHFKDKKKFYKKIEQFKEFQERISVHFQNEKLLYQAFTHSSYVNEHRKKPYEDNERLEFLGDAVLELTISQFLFAKYPAMSEGDLTKLRAAIVCEPSLVSLAHELSFGDLVLLGKGEEMTGGRKRPALLADVFEAFIGALYLDQGLDPVQQFLKVYVFPKINDGAFSHVMDFKSQLQEFVQRDGKGSLEYKILNEKGPAHNREFEALVSLKGEALGIGNGRSKKEAEQHAAQEALAKMQKHHTKQ.

Residues 20-149 form the RNase III domain; it reads FKEFQERISV…FIGALYLDQG (130 aa). Position 62 (E62) interacts with Mg(2+). The active site involves D66. Residues D135 and E138 each coordinate Mg(2+). The active site involves E138. One can recognise a DRBM domain in the interval 175–244; the sequence is DFKSQLQEFV…AQEALAKMQK (70 aa). The tract at residues 223–249 is disordered; sequence NGRSKKEAEQHAAQEALAKMQKHHTKQ.

It belongs to the ribonuclease III family. As to quaternary structure, homodimer. Mg(2+) is required as a cofactor.

It localises to the cytoplasm. It catalyses the reaction Endonucleolytic cleavage to 5'-phosphomonoester.. In terms of biological role, digests double-stranded RNA. Involved in the processing of primary rRNA transcript to yield the immediate precursors to the large and small rRNAs (23S and 16S). Processes some mRNAs, and tRNAs when they are encoded in the rRNA operon. Processes pre-crRNA and tracrRNA of type II CRISPR loci if present in the organism. The polypeptide is Ribonuclease 3 (Bacillus velezensis (strain DSM 23117 / BGSC 10A6 / LMG 26770 / FZB42) (Bacillus amyloliquefaciens subsp. plantarum)).